A 475-amino-acid polypeptide reads, in one-letter code: MESKALLLVALGMWFQSLTATRGGVAAADRGGDFIDIESKFALRTPEDTAEDTCHLIPGVTESVANCHFNHSSKTFVVIHGWTVTGMYESWVPKLVAALYKREPDSNVIVVDWLSRAQQHYPVSAGYTKLVGKDVAKFINWMAEEFHYPLDNVHLLGYSLGAHAAGIAGSLTNKKVNRITGLDPAGPNFEYAEAPSRLSPDDADFVDVLHTFTRGSPGRSIGIQKPVGHVDIYPNGGTFQPGCNIGEAIRVIAERGLGDVDQLVKCSHERSIHLFIDSLLNEENPSKAYRCNSKEAFEKGLCLSCRKNRCNNLGYEINKVRAKRSSKMYLKTRSQMPYKVFHYQVKIHFSGTESDTQTNQAFEISLYGTVAESENIPFTLPEVSANKTYSFLIYTEVDIGELLMLKLKWKSDSYFSWSDWWSSPGFAIEKIRVKAGETQKKVIFCSREKVSHLQKGKASVVFVKCHDKSLNKKSG.

The signal sequence occupies residues 1–27 (MESKALLLVALGMWFQSLTATRGGVAA). Residues 32-53 (GDFIDIESKFALRTPEDTAEDT) are interaction with GPIHBP1. The cysteines at positions 54 and 67 are disulfide-linked. Asparagine 70 carries an N-linked (GlcNAc...) asparagine glycan. Tyrosine 121 is modified (3'-nitrotyrosine). The active-site Nucleophile is serine 159. Aspartate 183 serves as the catalytic Charge relay system. Residue tyrosine 191 is modified to 3'-nitrotyrosine. The Ca(2+) site is built by alanine 194, arginine 197, serine 199, and aspartate 202. Cysteine 243 and cysteine 266 are oxidised to a cystine. Histidine 268 (charge relay system) is an active-site residue. 2 disulfides stabilise this stretch: cysteine 291–cysteine 310 and cysteine 302–cysteine 305. Residues 341-464 (FHYQVKIHFS…KGKASVVFVK (124 aa)) enclose the PLAT domain. The residue at position 343 (tyrosine 343) is a 3'-nitrotyrosine. An N-linked (GlcNAc...) asparagine glycan is attached at asparagine 386. The segment at 417 to 421 (WSDWW) is important for interaction with lipoprotein particles. Positions 430-434 (KIRVK) are important for heparin binding. The tract at residues 443-467 (IFCSREKVSHLQKGKASVVFVKCHD) is interaction with GPIHBP1. Cysteine 445 and cysteine 465 are disulfide-bonded.

This sequence belongs to the AB hydrolase superfamily. Lipase family. As to quaternary structure, homodimer. Interacts with GPIHBP1 with 1:1 stoichiometry. Interacts with APOC2; the interaction activates LPL activity in the presence of lipids. Interaction with heparan sulfate proteoglycans is required to protect LPL against loss of activity. Associates with lipoprotein particles in blood plasma. Interacts with LMF1 and SEL1L; interaction with SEL1L is required to prevent aggregation of newly synthesized LPL in the endoplasmic reticulum (ER), and for normal export of LPL from the ER to the extracellular space. Interacts with SORL1; SORL1 acts as a sorting receptor, promoting LPL localization to endosomes and later to lysosomes, leading to degradation of newly synthesized LPL. Tyrosine nitration after lipopolysaccharide (LPS) challenge down-regulates the lipase activity.

The protein resides in the cell membrane. It localises to the secreted. The protein localises to the extracellular space. Its subcellular location is the extracellular matrix. The enzyme catalyses a triacylglycerol + H2O = a diacylglycerol + a fatty acid + H(+). With respect to regulation, the apolipoprotein APOC2 acts as a coactivator of LPL activity. Ca(2+) binding promotes protein stability and formation of the active homodimer. Interaction with GPIHBP1 protects LPL against inactivation by ANGPTL4. Key enzyme in triglyceride metabolism. Catalyzes the hydrolysis of triglycerides from circulating chylomicrons and very low density lipoproteins (VLDL), and thereby plays an important role in lipid clearance from the blood stream, lipid utilization and storage. Mediates margination of triglyceride-rich lipoprotein particles in capillaries. Recruited to its site of action on the luminal surface of vascular endothelium by binding to GPIHBP1 and cell surface heparan sulfate proteoglycans. The sequence is that of Lipoprotein lipase (LPL) from Neovison vison (American mink).